Here is a 202-residue protein sequence, read N- to C-terminus: Adenylate kinase (202 aa).

12–20 is a binding site for ATP; it reads GVPGVGKTT.

Belongs to the archaeal adenylate kinase family.

The protein localises to the cytoplasm. The catalysed reaction is AMP + ATP = 2 ADP. This chain is Adenylate kinase (adkA), found in Aeropyrum pernix (strain ATCC 700893 / DSM 11879 / JCM 9820 / NBRC 100138 / K1).